The following is a 276-amino-acid chain: Undecaprenyl-diphosphatase (276 aa).

Helical transmembrane passes span 48-68 (AANS…AIVF), 92-112 (LTIA…FLFE), 119-139 (LFSV…MLIA), 155-175 (ITYK…WPGF), 196-216 (ADFT…LKLV), 229-249 (FFLV…KFFL), and 255-275 (IKLV…IMLV).

Belongs to the UppP family.

The protein resides in the cell membrane. The catalysed reaction is di-trans,octa-cis-undecaprenyl diphosphate + H2O = di-trans,octa-cis-undecaprenyl phosphate + phosphate + H(+). Functionally, catalyzes the dephosphorylation of undecaprenyl diphosphate (UPP). Confers resistance to bacitracin. This Bacillus velezensis (strain DSM 23117 / BGSC 10A6 / LMG 26770 / FZB42) (Bacillus amyloliquefaciens subsp. plantarum) protein is Undecaprenyl-diphosphatase.